A 358-amino-acid chain; its full sequence is Peptide chain release factor 2 (358 aa).

Gln-242 carries the post-translational modification N5-methylglutamine.

This sequence belongs to the prokaryotic/mitochondrial release factor family. In terms of processing, methylated by PrmC. Methylation increases the termination efficiency of RF2.

It localises to the cytoplasm. Its function is as follows. Peptide chain release factor 2 directs the termination of translation in response to the peptide chain termination codons UGA and UAA. This is Peptide chain release factor 2 (prfB) from Borreliella burgdorferi (strain ATCC 35210 / DSM 4680 / CIP 102532 / B31) (Borrelia burgdorferi).